A 359-amino-acid polypeptide reads, in one-letter code: Peptide chain release factor 1 (359 aa).

Gln233 is subject to N5-methylglutamine.

It belongs to the prokaryotic/mitochondrial release factor family. Methylated by PrmC. Methylation increases the termination efficiency of RF1.

Its subcellular location is the cytoplasm. Peptide chain release factor 1 directs the termination of translation in response to the peptide chain termination codons UAG and UAA. This Orientia tsutsugamushi (strain Boryong) (Rickettsia tsutsugamushi) protein is Peptide chain release factor 1.